The chain runs to 303 residues: MATH domain and coiled-coil domain-containing protein At3g58250 (303 aa).

One can recognise an MATH domain in the interval 8-135 (KKKFSWVIKN…KGELKIVVEI (128 aa)). A coiled-coil region spans residues 231–287 (KLDWLKKKLDQVTQKKEKEAAGETRMHEIGEELKDLKLKCSDLEAQLDKEKADVLAA).

This is MATH domain and coiled-coil domain-containing protein At3g58250 from Arabidopsis thaliana (Mouse-ear cress).